We begin with the raw amino-acid sequence, 938 residues long: Probable outer membrane protein pmp15 (938 aa).

The first 17 residues, 1–17 (MRFFCFGMLLPFTFVLA), serve as a signal peptide directing secretion. The region spanning 659–938 (DEEKGHAASL…YLNVASRMRF (280 aa)) is the Autotransporter domain.

The protein belongs to the PMP outer membrane protein family.

Its subcellular location is the secreted. It localises to the cell wall. It is found in the cell outer membrane. The chain is Probable outer membrane protein pmp15 (pmp15) from Chlamydia pneumoniae (Chlamydophila pneumoniae).